The sequence spans 210 residues: Chloramphenicol acetyltransferase (210 aa).

His-79 is a catalytic residue.

This sequence belongs to the transferase hexapeptide repeat family.

The catalysed reaction is chloramphenicol + acetyl-CoA = chloramphenicol 3-acetate + CoA. In terms of biological role, this enzyme is an effector of chloramphenicol resistance in bacteria. In Morganella morganii (Proteus morganii), this protein is Chloramphenicol acetyltransferase (cat).